A 515-amino-acid polypeptide reads, in one-letter code: Na(+)/H(+) antiporter NhaB (515 aa).

13 consecutive transmembrane segments (helical) span residues 23–43, 44–64, 88–108, 119–139, 143–163, 202–222, 238–258, 303–323, 324–344, 357–377, 389–409, 447–467, and 477–497; these read IIVFLILNPILYFLISPFIAG, WCLVIEFIFTLAMALKCYPLQ, IMASFEVILLLMFMVAGIYFM, LLITVRSKIVLSLSFCLSAAF, FLDALTVVAVIISVVMGFYGV, LMMHAGVGTALGGVMTLVGEP, FFIRMAPVTVPVLICGLITCV, GIIGIWLVCGLAFHLAAVGLI, GLSVIVLTTAFCGITSESTIG, LVVFFSVVAVIIDQHLFGPII, LLLFYGFNGLLSAISDNVFVA, ATPNGQAAFLFLLTSSLAPLI, and MALPYTIVLTVVGLLAVEYIL.

Belongs to the NhaB Na(+)/H(+) (TC 2.A.34) antiporter family.

The protein resides in the cell inner membrane. It carries out the reaction 2 Na(+)(in) + 3 H(+)(out) = 2 Na(+)(out) + 3 H(+)(in). Na(+)/H(+) antiporter that extrudes sodium in exchange for external protons. This Mannheimia succiniciproducens (strain KCTC 0769BP / MBEL55E) protein is Na(+)/H(+) antiporter NhaB.